Consider the following 763-residue polypeptide: Autophagy-related protein 18f (763 aa).

WD repeat units lie at residues 345–385 (AHKS…STSR) and 402–441 (FTNA…EGDA). Positions 701 to 711 (NESIQSPSTTT) are enriched in polar residues. The disordered stretch occupies residues 701-763 (NESIQSPSTT…SEDEDEEQVD (63 aa)). Composition is skewed to basic and acidic residues over residues 712–725 (QDDK…HGTE) and 741–754 (PVDK…KNHS).

Belongs to the WD repeat PROPPIN family. In terms of assembly, component of the PI(3,5)P2 regulatory complex at least composed of ATG18, SAC/FIG4, FAB1 and VAC14. Expressed in roots, flowers and leaves.

Its subcellular location is the preautophagosomal structure membrane. It localises to the vacuole membrane. Functionally, the PI(3,5)P2 regulatory complex regulates both the synthesis and turnover of phosphatidylinositol 3,5-bisphosphate (PtdIns(3,5)P2). Required for autophagy. This is Autophagy-related protein 18f (ATG18F) from Arabidopsis thaliana (Mouse-ear cress).